A 190-amino-acid polypeptide reads, in one-letter code: Shikimate kinase (190 aa).

ATP is bound at residue 14-19 (GSGKST). Serine 18 provides a ligand contact to Mg(2+). Substrate is bound by residues aspartate 36, arginine 60, and glycine 82. Arginine 120 provides a ligand contact to ATP. Arginine 147 contributes to the substrate binding site.

The protein belongs to the shikimate kinase family. Monomer. Requires Mg(2+) as cofactor.

The protein resides in the cytoplasm. The enzyme catalyses shikimate + ATP = 3-phosphoshikimate + ADP + H(+). It participates in metabolic intermediate biosynthesis; chorismate biosynthesis; chorismate from D-erythrose 4-phosphate and phosphoenolpyruvate: step 5/7. Catalyzes the specific phosphorylation of the 3-hydroxyl group of shikimic acid using ATP as a cosubstrate. This is Shikimate kinase from Chlorobium phaeobacteroides (strain DSM 266 / SMG 266 / 2430).